The following is a 124-amino-acid chain: Small ribosomal subunit protein bS6 (124 aa).

This sequence belongs to the bacterial ribosomal protein bS6 family.

Binds together with bS18 to 16S ribosomal RNA. This chain is Small ribosomal subunit protein bS6, found in Rippkaea orientalis (strain PCC 8801 / RF-1) (Cyanothece sp. (strain PCC 8801)).